A 562-amino-acid polypeptide reads, in one-letter code: Formate--tetrahydrofolate ligase (562 aa).

An ATP-binding site is contributed by 71–78 (TPAGEGKS).

This sequence belongs to the formate--tetrahydrofolate ligase family.

The enzyme catalyses (6S)-5,6,7,8-tetrahydrofolate + formate + ATP = (6R)-10-formyltetrahydrofolate + ADP + phosphate. The protein operates within one-carbon metabolism; tetrahydrofolate interconversion. In Bacillus cereus (strain AH187), this protein is Formate--tetrahydrofolate ligase.